We begin with the raw amino-acid sequence, 440 residues long: tRNA-2-methylthio-N(6)-dimethylallyladenosine synthase (440 aa).

The region spanning 2–118 (PKYYIITYGC…LPKILESLDG (117 aa)) is the MTTase N-terminal domain. C11, C47, C81, C155, C159, and C162 together coordinate [4Fe-4S] cluster. One can recognise a Radical SAM core domain in the interval 141-370 (RENKFQAWIP…ENLQRKIIYE (230 aa)). Residues 373 to 436 (LSRVGKEEIV…LWSLKGEVIR (64 aa)) form the TRAM domain.

It belongs to the methylthiotransferase family. MiaB subfamily. As to quaternary structure, monomer. The cofactor is [4Fe-4S] cluster.

It localises to the cytoplasm. The enzyme catalyses N(6)-dimethylallyladenosine(37) in tRNA + (sulfur carrier)-SH + AH2 + 2 S-adenosyl-L-methionine = 2-methylsulfanyl-N(6)-dimethylallyladenosine(37) in tRNA + (sulfur carrier)-H + 5'-deoxyadenosine + L-methionine + A + S-adenosyl-L-homocysteine + 2 H(+). Functionally, catalyzes the methylthiolation of N6-(dimethylallyl)adenosine (i(6)A), leading to the formation of 2-methylthio-N6-(dimethylallyl)adenosine (ms(2)i(6)A) at position 37 in tRNAs that read codons beginning with uridine. The polypeptide is tRNA-2-methylthio-N(6)-dimethylallyladenosine synthase (Dictyoglomus thermophilum (strain ATCC 35947 / DSM 3960 / H-6-12)).